The primary structure comprises 147 residues: Transcriptional repressor NrdR (147 aa).

A zinc finger lies at 3–34 (CPYCGNVETTVVETRESDEGDAVRRRRRCSAC). Residues 49 to 139 (PAVVKKNGDR…VYREFEDIDA (91 aa)) enclose the ATP-cone domain.

This sequence belongs to the NrdR family. The cofactor is Zn(2+).

Negatively regulates transcription of bacterial ribonucleotide reductase nrd genes and operons by binding to NrdR-boxes. The sequence is that of Transcriptional repressor NrdR from Leptothrix cholodnii (strain ATCC 51168 / LMG 8142 / SP-6) (Leptothrix discophora (strain SP-6)).